We begin with the raw amino-acid sequence, 378 residues long: Anhydro-N-acetylmuramic acid kinase 2 (378 aa).

14-22 (GTVLDGNID) provides a ligand contact to ATP.

It belongs to the anhydro-N-acetylmuramic acid kinase family.

It carries out the reaction 1,6-anhydro-N-acetyl-beta-muramate + ATP + H2O = N-acetyl-D-muramate 6-phosphate + ADP + H(+). The protein operates within amino-sugar metabolism; 1,6-anhydro-N-acetylmuramate degradation. Its pathway is cell wall biogenesis; peptidoglycan recycling. In terms of biological role, catalyzes the specific phosphorylation of 1,6-anhydro-N-acetylmuramic acid (anhMurNAc) with the simultaneous cleavage of the 1,6-anhydro ring, generating MurNAc-6-P. Is required for the utilization of anhMurNAc either imported from the medium or derived from its own cell wall murein, and thus plays a role in cell wall recycling. The sequence is that of Anhydro-N-acetylmuramic acid kinase 2 from Jannaschia sp. (strain CCS1).